A 151-amino-acid chain; its full sequence is Putative UPF0320 protein YFL063W (151 aa).

It belongs to the UPF0320 family.

In Saccharomyces cerevisiae (strain ATCC 204508 / S288c) (Baker's yeast), this protein is Putative UPF0320 protein YFL063W.